A 152-amino-acid polypeptide reads, in one-letter code: 6,7-dimethyl-8-ribityllumazine synthase (152 aa).

5-amino-6-(D-ribitylamino)uracil is bound by residues F21, 55–57, and 79–81; these read AFE and CVI. A (2S)-2-hydroxy-3-oxobutyl phosphate-binding site is contributed by 84–85; the sequence is ST. H87 serves as the catalytic Proton donor. 5-amino-6-(D-ribitylamino)uracil is bound at residue F112. R126 is a binding site for (2S)-2-hydroxy-3-oxobutyl phosphate.

Belongs to the DMRL synthase family. As to quaternary structure, forms an icosahedral capsid composed of 60 subunits, arranged as a dodecamer of pentamers.

The enzyme catalyses (2S)-2-hydroxy-3-oxobutyl phosphate + 5-amino-6-(D-ribitylamino)uracil = 6,7-dimethyl-8-(1-D-ribityl)lumazine + phosphate + 2 H2O + H(+). It functions in the pathway cofactor biosynthesis; riboflavin biosynthesis; riboflavin from 2-hydroxy-3-oxobutyl phosphate and 5-amino-6-(D-ribitylamino)uracil: step 1/2. Its function is as follows. Catalyzes the formation of 6,7-dimethyl-8-ribityllumazine by condensation of 5-amino-6-(D-ribitylamino)uracil with 3,4-dihydroxy-2-butanone 4-phosphate. This is the penultimate step in the biosynthesis of riboflavin. The chain is 6,7-dimethyl-8-ribityllumazine synthase from Staphylococcus saprophyticus subsp. saprophyticus (strain ATCC 15305 / DSM 20229 / NCIMB 8711 / NCTC 7292 / S-41).